The sequence spans 114 residues: Cuticle protein AMP5 (114 aa).

Glutamine 1 bears the Pyrrolidone carboxylic acid mark. The Chitin-binding type R&amp;R domain occupies 18–83 (AGNYFYEFET…VDSPLIPVAP (66 aa)).

In terms of tissue distribution, arthrodial membrane.

The sequence is that of Cuticle protein AMP5 from Homarus americanus (American lobster).